A 135-amino-acid chain; its full sequence is Immunity protein RhsIA (135 aa).

The segment at 58–77 (RKQGRQISLSCGEPPEYSPD) is disordered.

In terms of biological role, immunity component of a toxin-immunity protein module, which functions as a cellular contact-dependent growth inhibition (CDI) system. Specifically inhibits its cognate toxin RhsA. Cell contact is necessary for growth inhibition. The sequence is that of Immunity protein RhsIA (rhsIA) from Dickeya dadantii (strain 3937) (Erwinia chrysanthemi (strain 3937)).